Consider the following 681-residue polypeptide: Minichromosome maintenance domain-containing protein 2 (681 aa).

At Ser292 the chain carries Phosphoserine. The 89-residue stretch at 533–621 (RQFTTEDFEK…LIAALLFETS (89 aa)) folds into the MCM domain.

In terms of biological role, plays an important role in meiotic recombination and associated DNA double-strand break repair. The chain is Minichromosome maintenance domain-containing protein 2 (MCMDC2) from Homo sapiens (Human).